We begin with the raw amino-acid sequence, 266 residues long: Hydroxyethylthiazole kinase (266 aa).

Position 44 (Met-44) interacts with substrate. Residues Lys-120 and Thr-166 each coordinate ATP. A substrate-binding site is contributed by Gly-193.

The protein belongs to the Thz kinase family. Requires Mg(2+) as cofactor.

It catalyses the reaction 5-(2-hydroxyethyl)-4-methylthiazole + ATP = 4-methyl-5-(2-phosphooxyethyl)-thiazole + ADP + H(+). It functions in the pathway cofactor biosynthesis; thiamine diphosphate biosynthesis; 4-methyl-5-(2-phosphoethyl)-thiazole from 5-(2-hydroxyethyl)-4-methylthiazole: step 1/1. In terms of biological role, catalyzes the phosphorylation of the hydroxyl group of 4-methyl-5-beta-hydroxyethylthiazole (THZ). The sequence is that of Hydroxyethylthiazole kinase from Syntrophomonas wolfei subsp. wolfei (strain DSM 2245B / Goettingen).